The sequence spans 382 residues: S-adenosylmethionine synthase (382 aa).

Histidine 15 provides a ligand contact to ATP. Aspartate 17 provides a ligand contact to Mg(2+). K(+) is bound at residue glutamate 43. Positions 56 and 99 each coordinate L-methionine. Residues 99-109 (QSGDIAQGVDR) form a flexible loop region. ATP is bound by residues 164–166 (DAK), 230–231 (KF), aspartate 239, 245–246 (RK), alanine 262, and lysine 266. Position 239 (aspartate 239) interacts with L-methionine. Lysine 270 is an L-methionine binding site.

Belongs to the AdoMet synthase family. In terms of assembly, homotetramer; dimer of dimers. Mg(2+) is required as a cofactor. K(+) serves as cofactor.

Its subcellular location is the cytoplasm. It carries out the reaction L-methionine + ATP + H2O = S-adenosyl-L-methionine + phosphate + diphosphate. Its pathway is amino-acid biosynthesis; S-adenosyl-L-methionine biosynthesis; S-adenosyl-L-methionine from L-methionine: step 1/1. Catalyzes the formation of S-adenosylmethionine (AdoMet) from methionine and ATP. The overall synthetic reaction is composed of two sequential steps, AdoMet formation and the subsequent tripolyphosphate hydrolysis which occurs prior to release of AdoMet from the enzyme. The protein is S-adenosylmethionine synthase of Dichelobacter nodosus (strain VCS1703A).